We begin with the raw amino-acid sequence, 306 residues long: Polyphosphate kinase PPK2B (306 aa).

This sequence belongs to the polyphosphate kinase 2 (PPK2) family. Class I subfamily. In terms of assembly, homotetramer. The cofactor is Mn(2+).

The catalysed reaction is [phosphate](n) + ATP = [phosphate](n+1) + ADP. It carries out the reaction [phosphate](n) + GTP = [phosphate](n+1) + GDP. Its function is as follows. Catalyzes the synthesis of polyP from ATP or GTP. Can also use inorganic polyphosphate (polyP) as a donor to convert ADP to ATP, but the activity is 10-fold higher in vitro for polyP synthesis than for ATP formation. This is Polyphosphate kinase PPK2B from Corynebacterium glutamicum (strain ATCC 13032 / DSM 20300 / JCM 1318 / BCRC 11384 / CCUG 27702 / LMG 3730 / NBRC 12168 / NCIMB 10025 / NRRL B-2784 / 534).